A 30-amino-acid chain; its full sequence is Cycloviolacin-O18 (30 aa).

Residues 1–30 (GIPCGESCVYIPCTVTALAGCKCKSKVCYN) constitute a cross-link (cyclopeptide (Gly-Asn)). Cystine bridges form between C4-C21, C8-C23, and C13-C28.

This is a cyclic peptide. Expressed in leaves, petals and petioles but not in roots and runners (at protein level).

In terms of biological role, probably participates in a plant defense mechanism. The polypeptide is Cycloviolacin-O18 (Viola odorata (Sweet violet)).